The following is a 187-amino-acid chain: Elongation factor P (187 aa).

The protein belongs to the elongation factor P family.

It is found in the cytoplasm. Its pathway is protein biosynthesis; polypeptide chain elongation. In terms of biological role, involved in peptide bond synthesis. Stimulates efficient translation and peptide-bond synthesis on native or reconstituted 70S ribosomes in vitro. Probably functions indirectly by altering the affinity of the ribosome for aminoacyl-tRNA, thus increasing their reactivity as acceptors for peptidyl transferase. The sequence is that of Elongation factor P from Ruegeria sp. (strain TM1040) (Silicibacter sp.).